The chain runs to 356 residues: Nicotinate-nucleotide--dimethylbenzimidazole phosphoribosyltransferase (356 aa).

E317 functions as the Proton acceptor in the catalytic mechanism.

Belongs to the CobT family. Homodimer.

The catalysed reaction is 5,6-dimethylbenzimidazole + nicotinate beta-D-ribonucleotide = alpha-ribazole 5'-phosphate + nicotinate + H(+). It participates in nucleoside biosynthesis; alpha-ribazole biosynthesis; alpha-ribazole from 5,6-dimethylbenzimidazole: step 1/2. In terms of biological role, catalyzes the synthesis of alpha-ribazole-5'-phosphate from nicotinate mononucleotide (NAMN) and 5,6-dimethylbenzimidazole (DMB). This Salmonella dublin (strain CT_02021853) protein is Nicotinate-nucleotide--dimethylbenzimidazole phosphoribosyltransferase.